A 78-amino-acid chain; its full sequence is DNA-directed RNA polymerase subunit omega (78 aa).

This sequence belongs to the RNA polymerase subunit omega family. As to quaternary structure, in cyanobacteria the RNAP catalytic core is composed of 2 alpha, 1 beta, 1 beta', 1 gamma and 1 omega subunit. When a sigma factor is associated with the core the holoenzyme is formed, which can initiate transcription.

The enzyme catalyses RNA(n) + a ribonucleoside 5'-triphosphate = RNA(n+1) + diphosphate. Functionally, promotes RNA polymerase assembly. Latches the N- and C-terminal regions of the beta' subunit thereby facilitating its interaction with the beta and alpha subunits. The polypeptide is DNA-directed RNA polymerase subunit omega (Prochlorococcus marinus (strain MIT 9301)).